Here is a 71-residue protein sequence, read N- to C-terminus: Beta-defensin 124 (71 aa).

Residues Met-1 to Ser-22 form the signal peptide. 3 disulfide bridges follow: Cys-27–Cys-54, Cys-34–Cys-48, and Cys-38–Cys-55.

This sequence belongs to the beta-defensin family.

The protein resides in the secreted. Has antibacterial activity. The protein is Beta-defensin 124 (DEFB124) of Homo sapiens (Human).